Here is a 539-residue protein sequence, read N- to C-terminus: 3-hydroxy-3-methylglutaryl-coenzyme A reductase 1 (539 aa).

Residues 63 to 83 (FATVVCQLASVVYLLSLFAHP) traverse the membrane as a helical segment. The linker stretch occupies residues 84-124 (DAPATTTGDDDDGQGGSRRARPAAAEPAPMHGHGGGMMEAD). Residues 87-116 (ATTTGDDDDGQGGSRRARPAAAEPAPMHGH) form a disordered region. Residues 105 to 114 (PAAAEPAPMH) show a composition bias toward low complexity. The tract at residues 125–539 (DEEIVAAVAS…SSKDVAKAAS (415 aa)) is catalytic. The Charge relay system role is filled by E218. Residue N282 is glycosylated (N-linked (GlcNAc...) asparagine). Residues K350 and D426 each act as charge relay system in the active site. A helical transmembrane segment spans residues 496 to 516 (LATIVAGSVLAGELSLLAALA). H524 serves as the catalytic Proton donor. The N-linked (GlcNAc...) asparagine glycan is linked to N528.

The protein belongs to the HMG-CoA reductase family.

Its subcellular location is the endoplasmic reticulum membrane. The enzyme catalyses (R)-mevalonate + 2 NADP(+) + CoA = (3S)-3-hydroxy-3-methylglutaryl-CoA + 2 NADPH + 2 H(+). The protein operates within metabolic intermediate biosynthesis; (R)-mevalonate biosynthesis; (R)-mevalonate from acetyl-CoA: step 3/3. Catalyzes the synthesis of mevalonate. The specific precursor of all isoprenoid compounds present in plants. This chain is 3-hydroxy-3-methylglutaryl-coenzyme A reductase 1 (HMG1), found in Oryza sativa subsp. indica (Rice).